Reading from the N-terminus, the 346-residue chain is Cyclin-dependent kinase 7 (346 aa).

Alanine 2 bears the N-acetylalanine mark. Residue serine 7 is modified to Phosphoserine. The Protein kinase domain maps to 12 to 295 (YEKLDFLGEG…ASQALKTKYF (284 aa)). ATP is bound by residues 18 to 26 (LGEGQFATV) and lysine 41. The active-site Proton acceptor is the aspartate 137. Serine 164 carries the phosphoserine; by CDK1 and CDK2 modification. Threonine 170 bears the Phosphothreonine; by CDK2 mark.

It belongs to the protein kinase superfamily. CMGC Ser/Thr protein kinase family. CDC2/CDKX subfamily. Associates primarily with cyclin-H (CCNH) and MAT1 to form the CAK complex. CAK can further associate with the core-TFIIH to form the TFIIH basal transcription factor; this complex is sensitive to UV light. The CAK complex binds to p53/TP53 in response to DNA damage. Interacts with CDK2, SF1/NR5A1, PUF60 and PRKCI. Interacts with HINT1. Phosphorylation of Ser-164 during mitosis inactivates the enzyme. Phosphorylation of Thr-170 is required for activity. Phosphorylated at Ser-164 and Thr-170 by CDK2.

Its subcellular location is the nucleus. It localises to the cytoplasm. The protein resides in the perinuclear region. It catalyses the reaction L-seryl-[protein] + ATP = O-phospho-L-seryl-[protein] + ADP + H(+). The enzyme catalyses L-threonyl-[protein] + ATP = O-phospho-L-threonyl-[protein] + ADP + H(+). The catalysed reaction is [DNA-directed RNA polymerase] + ATP = phospho-[DNA-directed RNA polymerase] + ADP + H(+). With respect to regulation, phosphorylation at Thr-170 is required for enzymatic activity. The association of p53/TP53 to the CAK complex in response to DNA damage reduces kinase activity toward CDK2 and RNA polymerase II repetitive C-terminal domain (CTD), thus stopping cell cycle progression. In terms of biological role, serine/threonine kinase involved in cell cycle control and in RNA polymerase II-mediated RNA transcription. Cyclin-dependent kinases (CDKs) are activated by the binding to a cyclin and mediate the progression through the cell cycle. Each different complex controls a specific transition between 2 subsequent phases in the cell cycle. Required for both activation and complex formation of CDK1/cyclin-B during G2-M transition, and for activation of CDK2/cyclins during G1-S transition (but not complex formation). CDK7 is the catalytic subunit of the CDK-activating kinase (CAK) complex. Phosphorylates SPT5/SUPT5H, SF1/NR5A1, POLR2A, p53/TP53, CDK1, CDK2, CDK4, CDK6 and CDK11B/CDK11. Initiates transcription by RNA polymerase II by mediating phosphorylation of POLR2A at 'Ser-5' of the repetitive C-terminal domain (CTD) when POLR2A is in complex with DNA, promoting dissociation from DNA and initiation. CAK activates the cyclin-associated kinases CDK1, CDK2, CDK4 and CDK6 by threonine phosphorylation, thus regulating cell cycle progression. CAK complexed to the core-TFIIH basal transcription factor activates RNA polymerase II by serine phosphorylation of the CTD of POLR2A, allowing its escape from the promoter and elongation of the transcripts. Its expression and activity are constant throughout the cell cycle. Upon DNA damage, triggers p53/TP53 activation by phosphorylation, but is inactivated in turn by p53/TP53; this feedback loop may lead to an arrest of the cell cycle and of the transcription, helping in cell recovery, or to apoptosis. Required for DNA-bound peptides-mediated transcription and cellular growth inhibition. This chain is Cyclin-dependent kinase 7 (Cdk7), found in Mus musculus (Mouse).